We begin with the raw amino-acid sequence, 72 residues long: MTKKAKNVEKISFEDAMKRLEEIIDLMNQPTTSLEASLALYEEADQLMRICESRIQEVEARIKQLSDQRSES.

Belongs to the XseB family. Heterooligomer composed of large and small subunits.

Its subcellular location is the cytoplasm. It carries out the reaction Exonucleolytic cleavage in either 5'- to 3'- or 3'- to 5'-direction to yield nucleoside 5'-phosphates.. Its function is as follows. Bidirectionally degrades single-stranded DNA into large acid-insoluble oligonucleotides, which are then degraded further into small acid-soluble oligonucleotides. The sequence is that of Exodeoxyribonuclease 7 small subunit from Chlamydia trachomatis serovar D (strain ATCC VR-885 / DSM 19411 / UW-3/Cx).